The sequence spans 298 residues: Phosphatidylserine decarboxylase proenzyme (298 aa).

Residues aspartate 113, histidine 169, and serine 256 each act as charge relay system; for autoendoproteolytic cleavage activity in the active site. Serine 256 functions as the Schiff-base intermediate with substrate; via pyruvic acid; for decarboxylase activity in the catalytic mechanism. Serine 256 bears the Pyruvic acid (Ser); by autocatalysis mark.

Belongs to the phosphatidylserine decarboxylase family. PSD-B subfamily. Prokaryotic type II sub-subfamily. Heterodimer of a large membrane-associated beta subunit and a small pyruvoyl-containing alpha subunit. Pyruvate serves as cofactor. In terms of processing, is synthesized initially as an inactive proenzyme. Formation of the active enzyme involves a self-maturation process in which the active site pyruvoyl group is generated from an internal serine residue via an autocatalytic post-translational modification. Two non-identical subunits are generated from the proenzyme in this reaction, and the pyruvate is formed at the N-terminus of the alpha chain, which is derived from the carboxyl end of the proenzyme. The autoendoproteolytic cleavage occurs by a canonical serine protease mechanism, in which the side chain hydroxyl group of the serine supplies its oxygen atom to form the C-terminus of the beta chain, while the remainder of the serine residue undergoes an oxidative deamination to produce ammonia and the pyruvoyl prosthetic group on the alpha chain. During this reaction, the Ser that is part of the protease active site of the proenzyme becomes the pyruvoyl prosthetic group, which constitutes an essential element of the active site of the mature decarboxylase.

Its subcellular location is the cell membrane. It catalyses the reaction a 1,2-diacyl-sn-glycero-3-phospho-L-serine + H(+) = a 1,2-diacyl-sn-glycero-3-phosphoethanolamine + CO2. It functions in the pathway phospholipid metabolism; phosphatidylethanolamine biosynthesis; phosphatidylethanolamine from CDP-diacylglycerol: step 2/2. Functionally, catalyzes the formation of phosphatidylethanolamine (PtdEtn) from phosphatidylserine (PtdSer). The polypeptide is Phosphatidylserine decarboxylase proenzyme (Desulfitobacterium hafniense (strain Y51)).